A 61-amino-acid polypeptide reads, in one-letter code: Potassium channel toxin alpha-KTx 6.6 (61 aa).

A signal peptide spans 1–23 (MNAKFILLLLVVATTMLLPDTQG). 4 disulfide bridges follow: cysteine 29–cysteine 50, cysteine 35–cysteine 55, cysteine 39–cysteine 57, and cysteine 45–cysteine 60. Cysteine 60 carries the post-translational modification Cysteine amide.

This sequence belongs to the short scorpion toxin superfamily. Potassium channel inhibitor family. Alpha-KTx 06 subfamily. As to expression, expressed by the venom gland.

Its subcellular location is the secreted. Its function is as follows. Blocker of voltage-gated potassium channels. In Opistophthalmus carinatus (African yellow leg scorpion), this protein is Potassium channel toxin alpha-KTx 6.6.